A 684-amino-acid chain; its full sequence is MGTVSSRRLWWPLPLLLLLLLGPPGARAQEDDDGDYEELVLALRSEEDGPADALQHGATATFHRCAKDPWRLPGTYVVVLKDSDAHRSQPERTARRLQAQAARRGYLIKLLHVFHHLLPGFLVKMSRDLLELALRLPHVDYIEEDSSVFAQSIPWNLERITPARYRADEYQPPNGGSLVEVYLLDTSIQSSHREIEGRVMVTDFESVPEEDGTRFHRQASKCDSHGTHLAGVVSGRDAGVAKGASLRSLHVLNCQGKGTVSSALIGLEFIRKSQLVQPVGPLVVLLPLAGGYSRVLNAACRRLAGAGVVLVAAAGNFRDDACLYSPASAPEVITVGATNAQDQPLTLGTLGTNFGRCVDLFAPGEDIIGASSDCSTCFVSRSGTSQAAAHVAGIAAMMLSAEPELTLAELRQRLIHFSAKDVINEAWFPEDQRVLTPNLVATLPPSTHGAGWQLFCRTVWSAHSGPTRMATAMARCAPDEELLSCSSFSRSGKRRGERIEAQGGRRVCLAPNAFGGEGVYAVARCCLLPQANCSVHTAPPAGAGMGTRAHCHQQGHVLTGCSSHWEMKDLGTHKPPVLKPRGQPDQCMGHSGASTHASCCYAPGLECKVKEHGLPAPQEQVTVACEEGWTLTGCSALPGTSHVLGAYAVDDTCVVRSRDVSTTGSTSEEAVAAVAICCRSRHLA.

An N-terminal signal peptide occupies residues 1-28 (MGTVSSRRLWWPLPLLLLLLLGPPGARA). The propeptide occupies 29-151 (QEDDDGDYEE…IEEDSSVFAQ (123 aa)). Residue tyrosine 36 is modified to Sulfotyrosine. Serine 45 is subject to Phosphoserine. Residues 75 to 148 (TYVVVLKDSD…VDYIEEDSSV (74 aa)) enclose the Inhibitor I9 domain. The 307-residue stretch at 154–460 (PWNLERITPA…GWQLFCRTVW (307 aa)) folds into the Peptidase S8 domain. Catalysis depends on charge relay system residues aspartate 185 and histidine 225. Intrachain disulfides connect cysteine 222-cysteine 254 and cysteine 322-cysteine 357. Serine 385 acts as the Charge relay system in catalysis. Positions 451-684 (GWQLFCRTVW…AICCRSRHLA (234 aa)) are C-terminal domain. 3 disulfide bridges follow: cysteine 456-cysteine 526, cysteine 476-cysteine 525, and cysteine 485-cysteine 508. Residue asparagine 532 is glycosylated (N-linked (GlcNAc...) asparagine). 6 disulfide bridges follow: cysteine 533/cysteine 600, cysteine 551/cysteine 599, cysteine 561/cysteine 587, cysteine 607/cysteine 678, cysteine 625/cysteine 677, and cysteine 634/cysteine 653.

Belongs to the peptidase S8 family. Monomer. Can self-associate to form dimers and higher multimers which may have increased LDLR degrading activity. The precursor protein but not the mature protein may form multimers. Interacts with APOB, VLDLR, LRP8/APOER2 and BACE1. The full-length immature form (pro-PCSK9) interacts with SCNN1A, SCNN1B and SCNN1G. The pro-PCSK9 form (via C-terminal domain) interacts with LDLR. Interacts (via the C-terminal domain) with ANXA2 (via repeat Annexin 1); the interaction inhibits the degradation of LDLR. It depends on Ca(2+) as a cofactor. In terms of processing, cleavage by furin and PCSK5 generates a truncated inactive protein that is unable to induce LDLR degradation. Undergoes autocatalytic cleavage in the endoplasmic reticulum to release the propeptide from the N-terminus and the cleavage of the propeptide is strictly required for its maturation and activation. The cleaved propeptide however remains associated with the catalytic domain through non-covalent interactions, preventing potential substrates from accessing its active site. As a result, it is secreted from cells as a propeptide-containing, enzymatically inactive protein. Post-translationally, phosphorylation protects the propeptide against proteolysis.

It localises to the cytoplasm. The protein localises to the secreted. Its subcellular location is the endosome. The protein resides in the lysosome. It is found in the cell surface. It localises to the endoplasmic reticulum. The protein localises to the golgi apparatus. Its activity is regulated as follows. Its proteolytic activity is autoinhibited by the non-covalent binding of the propeptide to the catalytic domain. Inhibited by EGTA. Crucial player in the regulation of plasma cholesterol homeostasis. Binds to low-density lipid receptor family members: low density lipoprotein receptor (LDLR), very low density lipoprotein receptor (VLDLR), apolipoprotein E receptor (LRP1/APOER) and apolipoprotein receptor 2 (LRP8/APOER2), and promotes their degradation in intracellular acidic compartments. Acts via a non-proteolytic mechanism to enhance the degradation of the hepatic LDLR through a clathrin LDLRAP1/ARH-mediated pathway. May prevent the recycling of LDLR from endosomes to the cell surface or direct it to lysosomes for degradation. Can induce ubiquitination of LDLR leading to its subsequent degradation. Inhibits intracellular degradation of APOB via the autophagosome/lysosome pathway in a LDLR-independent manner. Involved in the disposal of non-acetylated intermediates of BACE1 in the early secretory pathway. Inhibits epithelial Na(+) channel (ENaC)-mediated Na(+) absorption by reducing ENaC surface expression primarily by increasing its proteasomal degradation. Regulates neuronal apoptosis via modulation of LRP8/APOER2 levels and related anti-apoptotic signaling pathways. The protein is Proprotein convertase subtilisin/kexin type 9 (PCSK9) of Plecturocebus moloch (Dusky titi monkey).